We begin with the raw amino-acid sequence, 244 residues long: 5-oxoprolinase subunit A (244 aa).

It belongs to the LamB/PxpA family. As to quaternary structure, forms a complex composed of PxpA, PxpB and PxpC.

The enzyme catalyses 5-oxo-L-proline + ATP + 2 H2O = L-glutamate + ADP + phosphate + H(+). Catalyzes the cleavage of 5-oxoproline to form L-glutamate coupled to the hydrolysis of ATP to ADP and inorganic phosphate. This chain is 5-oxoprolinase subunit A, found in Escherichia coli O17:K52:H18 (strain UMN026 / ExPEC).